We begin with the raw amino-acid sequence, 41 residues long: Large ribosomal subunit protein bL36 (41 aa).

This sequence belongs to the bacterial ribosomal protein bL36 family.

The sequence is that of Large ribosomal subunit protein bL36 from Hyphomonas neptunium (strain ATCC 15444).